Consider the following 494-residue polypeptide: 3-octaprenyl-4-hydroxybenzoate carboxy-lyase (494 aa).

Asn172 lines the Mn(2+) pocket. Residues 175-177, 189-191, and 194-195 each bind prenylated FMN; these read IYR, RWL, and RG. Glu238 is a Mn(2+) binding site. Asp287 (proton donor) is an active-site residue.

The protein belongs to the UbiD family. Homohexamer. Prenylated FMN serves as cofactor. The cofactor is Mn(2+).

It is found in the cell membrane. The catalysed reaction is a 4-hydroxy-3-(all-trans-polyprenyl)benzoate + H(+) = a 2-(all-trans-polyprenyl)phenol + CO2. It participates in cofactor biosynthesis; ubiquinone biosynthesis. Its function is as follows. Catalyzes the decarboxylation of 3-octaprenyl-4-hydroxy benzoate to 2-octaprenylphenol, an intermediate step in ubiquinone biosynthesis. This Escherichia coli O139:H28 (strain E24377A / ETEC) protein is 3-octaprenyl-4-hydroxybenzoate carboxy-lyase.